The sequence spans 289 residues: (+)-kolavelool synthase (289 aa).

This sequence belongs to the diterpene synthase family.

It carries out the reaction (+)-kolavenyl diphosphate + H2O = (+)-kolavelool + diphosphate. Functionally, involved in the biosynthesis of (+)-O-methylkolavelool. Catalyzes the biosynthesis of (+)-kolavelool from (+)-kolavenyl diphosphate via the release of the diphosphate moiety through the nucleophilic addition of a water molecule. This chain is (+)-kolavelool synthase, found in Herpetosiphon aurantiacus (strain ATCC 23779 / DSM 785 / 114-95).